We begin with the raw amino-acid sequence, 598 residues long: Biotin-dependent acyl-coenzyme A carboxylase alpha3 subunit (598 aa).

In terms of domain architecture, Biotin carboxylation spans 8 to 452; it reads RIAKVLVANR…SFSVHTRWIE (445 aa). The ATP-grasp domain maps to 127–324; it reads RHIAARAQAP…LVLQQFKIAN (198 aa). 155 to 216 is an ATP binding site; it reads AKEHGVPIAI…ERYLDKPRHV (62 aa). Mg(2+) contacts are provided by Glu282, Glu295, and Asn297. 3 residues coordinate Mn(2+): Glu282, Glu295, and Asn297. Residues 506 to 531 form a disordered region; sequence PAGVIRKKPKPRKRGGHTGAATSGDA. A compositionally biased stretch (basic residues) spans 510–521; sequence IRKKPKPRKRGG. The Biotinyl-binding domain maps to 522–598; that stretch reads HTGAATSGDA…TQGTVLAEIK (77 aa). Position 564 is an N6-biotinyllysine (Lys564).

The biotin-dependent acyl-CoA carboxylase complex is composed of AccA3, which contains the biotin carboxylase (BC) and biotin carboxyl carrier protein (BCCP) domains, and an AccD protein, which contains the carboxyl transferase (CT) domain. Requires Mg(2+) as cofactor. It depends on Mn(2+) as a cofactor. Biotin serves as cofactor.

It catalyses the reaction N(6)-biotinyl-L-lysyl-[protein] + hydrogencarbonate + ATP = N(6)-carboxybiotinyl-L-lysyl-[protein] + ADP + phosphate + H(+). The protein operates within lipid metabolism; fatty acid biosynthesis. Its pathway is lipid metabolism; mycolic acid biosynthesis. Component of a biotin-dependent acyl-CoA carboxylase complex. This subunit catalyzes the ATP-dependent carboxylation of the biotin carried by the biotin carboxyl carrier (BCC) domain, resulting in the formation of carboxyl biotin. In Mycobacterium leprae (strain TN), this protein is Biotin-dependent acyl-coenzyme A carboxylase alpha3 subunit (bccA).